Reading from the N-terminus, the 437-residue chain is Vasoactive intestinal polypeptide receptor 2 (437 aa).

Positions 1–22 (MRASVVLTCYCWLLVRVSSIHP) are cleaved as a signal peptide. At 23–123 (ECRFHLEIQE…EDESKITFYI (101 aa)) the chain is on the extracellular side. Disulfide bonds link C37-C60, C51-C92, and C74-C108. 3 N-linked (GlcNAc...) asparagine glycosylation sites follow: N57, N87, and N91. A helical transmembrane segment spans residues 124 to 149 (LVKAIYTLGYSVSLMSLTTGSIIICL). Topologically, residues 150–157 (FRKLHCTR) are cytoplasmic. The helical transmembrane segment at 158 to 179 (NYIHLNLFLSFMLRAISVLVKD) threads the bilayer. The Extracellular segment spans residues 180-202 (SVLYSSSGTLRCHDQPGSWVGCK). The cysteines at positions 201 and 270 are disulfide-linked. The chain crosses the membrane as a helical span at residues 203 to 227 (LSLVFFQYCIMANFYWLLVEGLYLH). At 228 to 238 (TLLVAILPPSR) the chain is on the cytoplasmic side. A helical membrane pass occupies residues 239–260 (CFLAYLLIGWGIPSVCIGAWIA). Topologically, residues 261 to 279 (TRLSLEDTGCWDTNDHSIP) are extracellular. Residues 280–303 (WWVIRMPILISIVVNFALFISIVR) traverse the membrane as a helical segment. The Cytoplasmic segment spans residues 304 to 324 (ILLQKLTSPDVGGNDQSQYKR). The helical transmembrane segment at 325 to 345 (LAKSTLLLIPLFGVHYMVFAA) threads the bilayer. Topologically, residues 346 to 353 (FPIGISST) are extracellular. Residues 354 to 377 (YQILFELCVGSFQGLVVAVLYCFL) traverse the membrane as a helical segment. Residues 378–437 (NSEVQCELKRRWRGLCLTQPGSRDYRLHSWSMSRNGSESALQIHRGSRTQSFLQSETSVI) are Cytoplasmic-facing.

It belongs to the G-protein coupled receptor 2 family. Interacts with ADCYAP1/PACAP (via N-terminal extracellular domain); activated by PACAP27 and CAPAC38 neuropeptides. Interacts with VIP; the interaction results in VIPR1 activation. As to expression, mainly in the thalamus, hippocampus and in the suprachiasmatic nucleus.

The protein resides in the cell membrane. Functionally, g protein-coupled receptor activated by the neuropeptides vasoactive intestinal peptide (VIP) and pituitary adenylate cyclase-activating polypeptide (ADCYAP1/PACAP). Binds VIP and both PACAP27 and PACAP38 bioactive peptides with the order of ligand affinity of VIP = PACAP38 &gt; PACAP27. Ligand binding causes a conformation change that triggers signaling via guanine nucleotide-binding proteins (G proteins) and modulates the activity of downstream effectors. Activates cAMP-dependent pathway. May be coupled to phospholipase C. The polypeptide is Vasoactive intestinal polypeptide receptor 2 (Rattus norvegicus (Rat)).